A 957-amino-acid polypeptide reads, in one-letter code: Glycine dehydrogenase (decarboxylating) (957 aa).

An N6-(pyridoxal phosphate)lysine modification is found at K708.

This sequence belongs to the GcvP family. As to quaternary structure, the glycine cleavage system is composed of four proteins: P, T, L and H. Requires pyridoxal 5'-phosphate as cofactor.

It catalyses the reaction N(6)-[(R)-lipoyl]-L-lysyl-[glycine-cleavage complex H protein] + glycine + H(+) = N(6)-[(R)-S(8)-aminomethyldihydrolipoyl]-L-lysyl-[glycine-cleavage complex H protein] + CO2. Functionally, the glycine cleavage system catalyzes the degradation of glycine. The P protein binds the alpha-amino group of glycine through its pyridoxal phosphate cofactor; CO(2) is released and the remaining methylamine moiety is then transferred to the lipoamide cofactor of the H protein. This Escherichia fergusonii (strain ATCC 35469 / DSM 13698 / CCUG 18766 / IAM 14443 / JCM 21226 / LMG 7866 / NBRC 102419 / NCTC 12128 / CDC 0568-73) protein is Glycine dehydrogenase (decarboxylating).